Here is a 46-residue protein sequence, read N- to C-terminus: Ligatoxin-B (46 aa).

3 disulfide bridges follow: cysteine 3-cysteine 40, cysteine 4-cysteine 32, and cysteine 16-cysteine 26.

Belongs to the plant thionin (TC 1.C.44) family.

The protein resides in the secreted. Thionins are small plant proteins which are toxic to animal cells. They seem to exert their toxic effect at the level of the cell membrane. Their precise function is not known. This is Ligatoxin-B from Phoradendron liga (Argentine mistletoe).